Consider the following 211-residue polypeptide: Ribosomal RNA small subunit methyltransferase G (211 aa).

S-adenosyl-L-methionine contacts are provided by residues G81, L86, 132 to 133, and R147; that span reads VE.

This sequence belongs to the methyltransferase superfamily. RNA methyltransferase RsmG family.

The protein resides in the cytoplasm. The enzyme catalyses guanosine(527) in 16S rRNA + S-adenosyl-L-methionine = N(7)-methylguanosine(527) in 16S rRNA + S-adenosyl-L-homocysteine. Functionally, specifically methylates the N7 position of guanine in position 527 of 16S rRNA. This Actinobacillus succinogenes (strain ATCC 55618 / DSM 22257 / CCUG 43843 / 130Z) protein is Ribosomal RNA small subunit methyltransferase G.